The chain runs to 228 residues: Cytidylate kinase (228 aa).

12 to 20 (GPSGSGKGT) contacts ATP.

Belongs to the cytidylate kinase family. Type 1 subfamily.

It is found in the cytoplasm. The catalysed reaction is CMP + ATP = CDP + ADP. It catalyses the reaction dCMP + ATP = dCDP + ADP. This Pseudomonas putida (strain ATCC 47054 / DSM 6125 / CFBP 8728 / NCIMB 11950 / KT2440) protein is Cytidylate kinase.